A 201-amino-acid polypeptide reads, in one-letter code: Holliday junction branch migration complex subunit RuvA (201 aa).

The interval M1–A64 is domain I. A domain II region spans residues S65–G143. Residues G144–A153 are flexible linker. Positions A153–K201 are domain III.

It belongs to the RuvA family. As to quaternary structure, homotetramer. Forms an RuvA(8)-RuvB(12)-Holliday junction (HJ) complex. HJ DNA is sandwiched between 2 RuvA tetramers; dsDNA enters through RuvA and exits via RuvB. An RuvB hexamer assembles on each DNA strand where it exits the tetramer. Each RuvB hexamer is contacted by two RuvA subunits (via domain III) on 2 adjacent RuvB subunits; this complex drives branch migration. In the full resolvosome a probable DNA-RuvA(4)-RuvB(12)-RuvC(2) complex forms which resolves the HJ.

It is found in the cytoplasm. Functionally, the RuvA-RuvB-RuvC complex processes Holliday junction (HJ) DNA during genetic recombination and DNA repair, while the RuvA-RuvB complex plays an important role in the rescue of blocked DNA replication forks via replication fork reversal (RFR). RuvA specifically binds to HJ cruciform DNA, conferring on it an open structure. The RuvB hexamer acts as an ATP-dependent pump, pulling dsDNA into and through the RuvAB complex. HJ branch migration allows RuvC to scan DNA until it finds its consensus sequence, where it cleaves and resolves the cruciform DNA. The protein is Holliday junction branch migration complex subunit RuvA of Thioalkalivibrio sulfidiphilus (strain HL-EbGR7).